Reading from the N-terminus, the 205-residue chain is Small ribosomal subunit protein uS2 (205 aa).

This sequence belongs to the universal ribosomal protein uS2 family.

The protein is Small ribosomal subunit protein uS2 of Methanoculleus marisnigri (strain ATCC 35101 / DSM 1498 / JR1).